The sequence spans 252 residues: 3-dehydroquinate dehydratase (252 aa).

Residues S21, 46-48, and R82 contribute to the 3-dehydroquinate site; that span reads EWR. The Proton donor/acceptor role is filled by H143. K170 acts as the Schiff-base intermediate with substrate in catalysis. R213, S232, and Q236 together coordinate 3-dehydroquinate.

Belongs to the type-I 3-dehydroquinase family. Homodimer.

The enzyme catalyses 3-dehydroquinate = 3-dehydroshikimate + H2O. The protein operates within metabolic intermediate biosynthesis; chorismate biosynthesis; chorismate from D-erythrose 4-phosphate and phosphoenolpyruvate: step 3/7. In terms of biological role, involved in the third step of the chorismate pathway, which leads to the biosynthesis of aromatic amino acids. Catalyzes the cis-dehydration of 3-dehydroquinate (DHQ) and introduces the first double bond of the aromatic ring to yield 3-dehydroshikimate. This Escherichia coli (strain K12 / MC4100 / BW2952) protein is 3-dehydroquinate dehydratase.